A 355-amino-acid polypeptide reads, in one-letter code: Tryptophan--tRNA ligase (355 aa).

ATP-binding positions include 13 to 15 and 21 to 22; these read QPT and GN. The 'HIGH' region motif lies at 14–22; it reads PTGNLHLGN. D137 contributes to the L-tryptophan binding site. ATP-binding positions include 149-151, I208, and 217-221; these read GED and KMSKS. Residues 217–221 carry the 'KMSKS' region motif; it reads KMSKS.

It belongs to the class-I aminoacyl-tRNA synthetase family. In terms of assembly, homodimer.

Its subcellular location is the cytoplasm. It carries out the reaction tRNA(Trp) + L-tryptophan + ATP = L-tryptophyl-tRNA(Trp) + AMP + diphosphate + H(+). Catalyzes the attachment of tryptophan to tRNA(Trp). In Mesorhizobium japonicum (strain LMG 29417 / CECT 9101 / MAFF 303099) (Mesorhizobium loti (strain MAFF 303099)), this protein is Tryptophan--tRNA ligase.